Here is a 286-residue protein sequence, read N- to C-terminus: Cbb3-type cytochrome c oxidase subunit CcoP (286 aa).

2 consecutive transmembrane segments (helical) span residues F11–I31 and V62–G82. 2 Cytochrome c domains span residues E116–L195 and Q205–R286. Residues C129, C132, H133, M174, C219, C222, H223, and M264 each contribute to the heme c site.

Belongs to the CcoP / FixP family. Component of the cbb3-type cytochrome c oxidase at least composed of CcoN, CcoO, CcoQ and CcoP. Heme c serves as cofactor.

It is found in the cell inner membrane. The protein operates within energy metabolism; oxidative phosphorylation. Functionally, C-type cytochrome. Part of the cbb3-type cytochrome c oxidase complex. CcoP subunit is required for transferring electrons from donor cytochrome c via its heme groups to CcoO subunit. From there, electrons are shuttled to the catalytic binuclear center of CcoN subunit where oxygen reduction takes place. The complex also functions as a proton pump. The sequence is that of Cbb3-type cytochrome c oxidase subunit CcoP from Helicobacter pylori (strain ATCC 700392 / 26695) (Campylobacter pylori).